Reading from the N-terminus, the 346-residue chain is Biotin synthase (346 aa).

In terms of domain architecture, Radical SAM core spans 38 to 256; the sequence is RQVQVSTLLS…IAVARIMMPT (219 aa). Positions 53, 57, and 60 each coordinate [4Fe-4S] cluster. Cys97, Cys128, Cys188, and Arg260 together coordinate [2Fe-2S] cluster.

This sequence belongs to the radical SAM superfamily. Biotin synthase family. In terms of assembly, homodimer. It depends on [4Fe-4S] cluster as a cofactor. [2Fe-2S] cluster serves as cofactor.

It catalyses the reaction (4R,5S)-dethiobiotin + (sulfur carrier)-SH + 2 reduced [2Fe-2S]-[ferredoxin] + 2 S-adenosyl-L-methionine = (sulfur carrier)-H + biotin + 2 5'-deoxyadenosine + 2 L-methionine + 2 oxidized [2Fe-2S]-[ferredoxin]. It functions in the pathway cofactor biosynthesis; biotin biosynthesis; biotin from 7,8-diaminononanoate: step 2/2. Its function is as follows. Catalyzes the conversion of dethiobiotin (DTB) to biotin by the insertion of a sulfur atom into dethiobiotin via a radical-based mechanism. This is Biotin synthase from Escherichia fergusonii (strain ATCC 35469 / DSM 13698 / CCUG 18766 / IAM 14443 / JCM 21226 / LMG 7866 / NBRC 102419 / NCTC 12128 / CDC 0568-73).